Consider the following 435-residue polypeptide: AP-2 complex subunit mu (435 aa).

S45 carries the post-translational modification Phosphoserine. T156 is subject to Phosphothreonine. An MHD domain is found at R170 to R434. A 1,2-diacyl-sn-glycero-3-phospho-(1D-myo-inositol-3,4,5-trisphosphate) contacts are provided by K341, K345, and K354.

This sequence belongs to the adaptor complexes medium subunit family. Adaptor protein complex 2 (AP-2) is a heterotetramer composed of two large adaptins (alpha-type subunit AP2A1 or AP2A2 and beta-type subunit AP2B1), a medium adaptin (mu-type subunit AP2M1) and a small adaptin (sigma-type subunit AP2S1). Interacts with ATP6V1H and MEGF10. Interacts with EGFR and TTGN1. Interacts with F2R. Interacts with PIP5K1C; tyrosine phosphorylation of PIP5K1C weakens the interaction. Interacts with KIAA0319; required for clathrin-mediated endocytosis of KIAA0319. Interacts with DVL2 (via DEP domain). Interacts with KCNQ1; mediates estrogen-induced internalization via clathrin-coated vesicles. Interacts with P2RX4 (via internalization motif). Together with AP2A1 or AP2A2 and AP2B1, it interacts with ADAM10; this interaction facilitates ADAM10 endocytosis from the plasma membrane during long-term potentiation in hippocampal neurons. Probably interacts with ACE2 (via endocytic sorting signal motif); the interaction is inhibited by ACE2 phosphorylation. Interacts with RALBP1; the interaction is direct. Interacts with TMEM106B (via N-terminus). Phosphorylation at Thr-156 increases the affinity of the AP-2 complex for cargo membrane proteins during the initial stages of endocytosis.

The protein localises to the cell membrane. It localises to the membrane. It is found in the coated pit. In terms of biological role, component of the adaptor protein complex 2 (AP-2). Adaptor protein complexes function in protein transport via transport vesicles in different membrane traffic pathways. Adaptor protein complexes are vesicle coat components and appear to be involved in cargo selection and vesicle formation. AP-2 is involved in clathrin-dependent endocytosis in which cargo proteins are incorporated into vesicles surrounded by clathrin (clathrin-coated vesicles, CCVs) which are destined for fusion with the early endosome. The clathrin lattice serves as a mechanical scaffold but is itself unable to bind directly to membrane components. Clathrin-associated adaptor protein (AP) complexes which can bind directly to both the clathrin lattice and to the lipid and protein components of membranes are considered to be the major clathrin adaptors contributing the CCV formation. AP-2 also serves as a cargo receptor to selectively sort the membrane proteins involved in receptor-mediated endocytosis. AP-2 seems to play a role in the recycling of synaptic vesicle membranes from the presynaptic surface. AP-2 recognizes Y-X-X-[FILMV] (Y-X-X-Phi) and [ED]-X-X-X-L-[LI] endocytosis signal motifs within the cytosolic tails of transmembrane cargo molecules. AP-2 may also play a role in maintaining normal post-endocytic trafficking through the ARF6-regulated, non-clathrin pathway. During long-term potentiation in hippocampal neurons, AP-2 is responsible for the endocytosis of ADAM10. The AP-2 mu subunit binds to transmembrane cargo proteins; it recognizes the Y-X-X-Phi motifs. The surface region interacting with to the Y-X-X-Phi motif is inaccessible in cytosolic AP-2, but becomes accessible through a conformational change following phosphorylation of AP-2 mu subunit at Thr-156 in membrane-associated AP-2. The membrane-specific phosphorylation event appears to involve assembled clathrin which activates the AP-2 mu kinase AAK1. Plays a role in endocytosis of frizzled family members upon Wnt signaling. In Bos taurus (Bovine), this protein is AP-2 complex subunit mu (AP2M1).